The chain runs to 162 residues: Lymphocyte antigen 86 (162 aa).

Positions 1-19 (MNGVAAALLVWILTSPSSS) are cleaved as a signal peptide. Disulfide bonds link cysteine 33–cysteine 58, cysteine 45–cysteine 154, and cysteine 102–cysteine 112. Residue asparagine 96 is glycosylated (N-linked (GlcNAc...) asparagine). Asparagine 156 carries an N-linked (GlcNAc...) asparagine glycan.

In terms of assembly, M-shaped tetramer of two CD180-LY86 heterodimers. Highly expressed in spleen, liver, brain and thymus, and at lower levels in kidney.

The protein resides in the secreted. The protein localises to the extracellular space. May cooperate with CD180 and TLR4 to mediate the innate immune response to bacterial lipopolysaccharide (LPS) and cytokine production. Important for efficient CD180 cell surface expression. The protein is Lymphocyte antigen 86 (Ly86) of Mus musculus (Mouse).